Consider the following 175-residue polypeptide: ATP synthase subunit b, chloroplastic (175 aa).

A helical membrane pass occupies residues 24–46; the sequence is VLNLAVVLAIVLTYVGDALRGLL.

This sequence belongs to the ATPase B chain family. In terms of assembly, F-type ATPases have 2 components, F(1) - the catalytic core - and F(0) - the membrane proton channel. F(1) has five subunits: alpha(3), beta(3), gamma(1), delta(1), epsilon(1). F(0) has four main subunits: a(1), b(1), b'(1) and c(10-14). The alpha and beta chains form an alternating ring which encloses part of the gamma chain. F(1) is attached to F(0) by a central stalk formed by the gamma and epsilon chains, while a peripheral stalk is formed by the delta, b and b' chains.

It is found in the plastid. The protein resides in the chloroplast thylakoid membrane. Functionally, f(1)F(0) ATP synthase produces ATP from ADP in the presence of a proton or sodium gradient. F-type ATPases consist of two structural domains, F(1) containing the extramembraneous catalytic core and F(0) containing the membrane proton channel, linked together by a central stalk and a peripheral stalk. During catalysis, ATP synthesis in the catalytic domain of F(1) is coupled via a rotary mechanism of the central stalk subunits to proton translocation. In terms of biological role, component of the F(0) channel, it forms part of the peripheral stalk, linking F(1) to F(0). In Chlorella vulgaris (Green alga), this protein is ATP synthase subunit b, chloroplastic.